The primary structure comprises 363 residues: MAKNRNLVFFLGVLASFTLSSFPVTVSGEPPILFTFGDSSYDVGNTKFFSSEFDPATTWPYGDSIDDPSGRWSDGHIVPDFVGRLIGHREPIPPVLDPKADLSRGASFAIAGAVVLGSQSTTASMNFGQQISKFLELHKQWTDKERAEAIYMVNIGAEDYLNFAKAHPNANTVEQLTQVAHVLQRIPRELTSLYRAGGARKFAVQNLGPLGCLPIVRQEFKTGENCMEMVNFMVKTHNERLSRLLVAITVPLLYRGFRYSLFDFNGEILRRINEPSLHGYTDTTTSCCGTGSRNAYGCGYSNVHAKLCSYQKSFLFFDGRHNTEKTDEEVANLFYSGDKHVVSPMNIKDLVGKAATDLLAQEI.

The signal sequence occupies residues 1 to 28; sequence MAKNRNLVFFLGVLASFTLSSFPVTVSG. Serine 39 acts as the Nucleophile in catalysis. Residues aspartate 318 and histidine 321 contribute to the active site.

The protein belongs to the 'GDSL' lipolytic enzyme family.

It is found in the secreted. The chain is GDSL esterase/lipase At3g14220 from Arabidopsis thaliana (Mouse-ear cress).